A 438-amino-acid polypeptide reads, in one-letter code: Methionine aminopeptidase 2 (438 aa).

Residues 1–89 form a disordered region; that stretch reads MAAQAAPAEE…LFPNKQYPKG (89 aa). Residues 10–20 are compositionally biased toward basic and acidic residues; the sequence is ELSKLSVEETK. The segment covering 51–65 has biased composition (basic residues); that stretch reads AKKKKKRKPRKKKKA. A substrate-binding site is contributed by His191. The a divalent metal cation site is built by Asp211, Asp222, and His291. Substrate is bound at residue His299. Residues Glu324 and Glu419 each contribute to the a divalent metal cation site.

This sequence belongs to the peptidase M24A family. Methionine aminopeptidase eukaryotic type 2 subfamily. The cofactor is Co(2+). Zn(2+) serves as cofactor. Mn(2+) is required as a cofactor. It depends on Fe(2+) as a cofactor.

The protein localises to the cytoplasm. It catalyses the reaction Release of N-terminal amino acids, preferentially methionine, from peptides and arylamides.. In terms of biological role, cotranslationally removes the N-terminal methionine from nascent proteins. The N-terminal methionine is often cleaved when the second residue in the primary sequence is small and uncharged (Met-Ala-, Cys, Gly, Pro, Ser, Thr, or Val). This is Methionine aminopeptidase 2 from Sordaria macrospora (strain ATCC MYA-333 / DSM 997 / K(L3346) / K-hell).